Here is a 318-residue protein sequence, read N- to C-terminus: Cytochrome f (318 aa).

The N-terminal stretch at 1–33 (MKNTFSWIKKEITRSISLSLMIYIITRTSISNA) is a signal peptide. 4 residues coordinate heme: Y34, C54, C57, and H58. The helical transmembrane segment at 284-304 (VQGLLFFLASVILAQIFLVLK) threads the bilayer.

Belongs to the cytochrome f family. The 4 large subunits of the cytochrome b6-f complex are cytochrome b6, subunit IV (17 kDa polypeptide, petD), cytochrome f and the Rieske protein, while the 4 small subunits are PetG, PetL, PetM and PetN. The complex functions as a dimer. The cofactor is heme.

It is found in the plastid. The protein localises to the chloroplast thylakoid membrane. Functionally, component of the cytochrome b6-f complex, which mediates electron transfer between photosystem II (PSII) and photosystem I (PSI), cyclic electron flow around PSI, and state transitions. The chain is Cytochrome f from Oenothera biennis (German evening primrose).